The primary structure comprises 427 residues: L-cysteine:1D-myo-inositol 2-amino-2-deoxy-alpha-D-glucopyranoside ligase (427 aa).

C46 contributes to the Zn(2+) binding site. L-cysteinyl-5'-AMP-binding positions include 46 to 49 (CGIT), T61, and 84 to 86 (NVT). The 'HIGH' region motif lies at 48–58 (ITPYDATHMGH). The short motif at 186-191 (ERGGDP) is the 'ERGGDP' region element. W233 contributes to the L-cysteinyl-5'-AMP binding site. C237 provides a ligand contact to Zn(2+). Position 255–257 (255–257 (GSD)) interacts with L-cysteinyl-5'-AMP. H262 contacts Zn(2+). V289 contacts L-cysteinyl-5'-AMP. The 'KMSKS' region motif lies at 295-299 (KMSKS).

This sequence belongs to the class-I aminoacyl-tRNA synthetase family. MshC subfamily. Monomer. Zn(2+) is required as a cofactor.

It catalyses the reaction 1D-myo-inositol 2-amino-2-deoxy-alpha-D-glucopyranoside + L-cysteine + ATP = 1D-myo-inositol 2-(L-cysteinylamino)-2-deoxy-alpha-D-glucopyranoside + AMP + diphosphate + H(+). Catalyzes the ATP-dependent condensation of GlcN-Ins and L-cysteine to form L-Cys-GlcN-Ins. This is L-cysteine:1D-myo-inositol 2-amino-2-deoxy-alpha-D-glucopyranoside ligase from Catenulispora acidiphila (strain DSM 44928 / JCM 14897 / NBRC 102108 / NRRL B-24433 / ID139908).